The chain runs to 470 residues: tRNA modification GTPase MnmE (470 aa).

(6S)-5-formyl-5,6,7,8-tetrahydrofolate is bound by residues Arg30, Glu92, and Arg132. Positions 227 to 393 constitute a TrmE-type G domain; the sequence is GLQVALVGRP…LIKAVLKTCG (167 aa). Asn237 lines the K(+) pocket. GTP is bound by residues 237–242, 256–262, 281–284, and 342–345; these read NVGKSS, TDLPGTT, DTAG, and NKAD. Ser241 is a binding site for Mg(2+). Residues Thr256, Leu258, and Thr261 each contribute to the K(+) site. Thr262 contacts Mg(2+). Residue Lys470 participates in (6S)-5-formyl-5,6,7,8-tetrahydrofolate binding.

This sequence belongs to the TRAFAC class TrmE-Era-EngA-EngB-Septin-like GTPase superfamily. TrmE GTPase family. In terms of assembly, homodimer. Heterotetramer of two MnmE and two MnmG subunits. K(+) serves as cofactor.

It is found in the cytoplasm. Functionally, exhibits a very high intrinsic GTPase hydrolysis rate. Involved in the addition of a carboxymethylaminomethyl (cmnm) group at the wobble position (U34) of certain tRNAs, forming tRNA-cmnm(5)s(2)U34. The protein is tRNA modification GTPase MnmE of Prochlorococcus marinus (strain MIT 9313).